Consider the following 142-residue polypeptide: Large ribosomal subunit protein uL11 (142 aa).

The tract at residues 84–103 (AGVKSGSGRPNSDKVGTVTD) is disordered.

The protein belongs to the universal ribosomal protein uL11 family. Part of the ribosomal stalk of the 50S ribosomal subunit. Interacts with L10 and the large rRNA to form the base of the stalk. L10 forms an elongated spine to which L12 dimers bind in a sequential fashion forming a multimeric L10(L12)X complex. In terms of processing, one or more lysine residues are methylated.

In terms of biological role, forms part of the ribosomal stalk which helps the ribosome interact with GTP-bound translation factors. The sequence is that of Large ribosomal subunit protein uL11 from Aliivibrio salmonicida (strain LFI1238) (Vibrio salmonicida (strain LFI1238)).